The following is a 375-amino-acid chain: All-trans-retinol dehydrogenase [NAD(+)] ADH1B (375 aa).

Ser-2 is modified (N-acetylserine). At Ser-23 the chain carries Phosphoserine. Tyr-35 is modified (phosphotyrosine). Zn(2+) contacts are provided by Cys-47, His-68, Cys-98, Cys-101, Cys-104, Cys-112, and Cys-175. NAD(+) is bound by residues 200–205, Asp-224, Lys-229, 293–295, and Arg-370; these read GLGGVG and VGV.

Belongs to the zinc-containing alcohol dehydrogenase family. In terms of assembly, homodimer or heterodimer of closely related subunits. Zn(2+) serves as cofactor. In terms of tissue distribution, expressed in liver.

The protein localises to the cytoplasm. It catalyses the reaction all-trans-retinol + NAD(+) = all-trans-retinal + NADH + H(+). The enzyme catalyses all-trans-4-hydroxyretinol + NAD(+) = all-trans-4-hydroxyretinal + NADH + H(+). The catalysed reaction is all-trans-4-oxoretinol + NAD(+) = all-trans-4-oxoretinal + NADH + H(+). In terms of biological role, catalyzes the NAD-dependent oxidation of all-trans-retinol and its derivatives such as all-trans-4-hydroxyretinol and may participate in retinoid metabolism. In vitro can also catalyze the NADH-dependent reduction of all-trans-retinal and its derivatives such as all-trans-4-oxoretinal. Catalyzes in the oxidative direction with higher efficiency. Has the same affinity for all-trans-4-hydroxyretinol and all-trans-4-oxoretinal. In Papio hamadryas (Hamadryas baboon), this protein is All-trans-retinol dehydrogenase [NAD(+)] ADH1B.